Reading from the N-terminus, the 236-residue chain is 2-C-methyl-D-erythritol 4-phosphate cytidylyltransferase (236 aa).

It belongs to the IspD/TarI cytidylyltransferase family. IspD subfamily. Homodimer.

It carries out the reaction 2-C-methyl-D-erythritol 4-phosphate + CTP + H(+) = 4-CDP-2-C-methyl-D-erythritol + diphosphate. The protein operates within isoprenoid biosynthesis; isopentenyl diphosphate biosynthesis via DXP pathway; isopentenyl diphosphate from 1-deoxy-D-xylulose 5-phosphate: step 2/6. In terms of biological role, catalyzes the formation of 4-diphosphocytidyl-2-C-methyl-D-erythritol from CTP and 2-C-methyl-D-erythritol 4-phosphate (MEP). The polypeptide is 2-C-methyl-D-erythritol 4-phosphate cytidylyltransferase (Salmonella typhimurium (strain LT2 / SGSC1412 / ATCC 700720)).